A 155-amino-acid polypeptide reads, in one-letter code: Ribosomal RNA large subunit methyltransferase H (155 aa).

Residues leucine 73, glycine 104, and 123-128 (LSPLTL) each bind S-adenosyl-L-methionine.

The protein belongs to the RNA methyltransferase RlmH family. In terms of assembly, homodimer.

It is found in the cytoplasm. The enzyme catalyses pseudouridine(1915) in 23S rRNA + S-adenosyl-L-methionine = N(3)-methylpseudouridine(1915) in 23S rRNA + S-adenosyl-L-homocysteine + H(+). In terms of biological role, specifically methylates the pseudouridine at position 1915 (m3Psi1915) in 23S rRNA. The sequence is that of Ribosomal RNA large subunit methyltransferase H from Stutzerimonas stutzeri (strain A1501) (Pseudomonas stutzeri).